We begin with the raw amino-acid sequence, 140 residues long: FK506-binding protein 2 (140 aa).

A signal peptide spans 1–19 (MKFTTGLSVLLFFVLQVFA). The 90-residue stretch at 43 to 132 (GDVVSVHYTG…IFETELVDIQ (90 aa)) folds into the PPIase FKBP-type domain.

The protein belongs to the FKBP-type PPIase family. FKBP2 subfamily.

It is found in the endoplasmic reticulum. It carries out the reaction [protein]-peptidylproline (omega=180) = [protein]-peptidylproline (omega=0). Its activity is regulated as follows. Inhibited by both FK506 and rapamycin. Functionally, PPIases accelerate the folding of proteins. It catalyzes the cis-trans isomerization of proline imidic peptide bonds in oligopeptides. This is FK506-binding protein 2 (FPR2) from Kluyveromyces lactis (strain ATCC 8585 / CBS 2359 / DSM 70799 / NBRC 1267 / NRRL Y-1140 / WM37) (Yeast).